The primary structure comprises 450 residues: Glucose-6-phosphate isomerase (450 aa).

T39 carries the phosphothreonine modification. Residue E291 is the Proton donor of the active site. Catalysis depends on residues H312 and K426.

This sequence belongs to the GPI family.

It localises to the cytoplasm. The catalysed reaction is alpha-D-glucose 6-phosphate = beta-D-fructose 6-phosphate. The protein operates within carbohydrate biosynthesis; gluconeogenesis. It participates in carbohydrate degradation; glycolysis; D-glyceraldehyde 3-phosphate and glycerone phosphate from D-glucose: step 2/4. Functionally, catalyzes the reversible isomerization of glucose-6-phosphate to fructose-6-phosphate. This Bacillus anthracis protein is Glucose-6-phosphate isomerase.